A 48-amino-acid chain; its full sequence is Sperm protamine R3 isoform 2 (48 aa).

Residues 1–29 (ARRRHSMKKKRKSVRRRKTRKNQRKRKNS) are compositionally biased toward basic residues. Positions 1–48 (ARRRHSMKKKRKSVRRRKTRKNQRKRKNSLGRSFKAHGFLKQPPRFRP) are disordered.

As to expression, testis.

It is found in the nucleus. It localises to the chromosome. Its function is as follows. Protamines substitute for histones in the chromatin of sperm during the haploid phase of spermatogenesis. They compact sperm DNA into a highly condensed, stable and inactive complex. This is Sperm protamine R3 isoform 2 from Hydrolagus colliei (Spotted ratfish).